Here is a 372-residue protein sequence, read N- to C-terminus: Ciliary neurotrophic factor receptor subunit alpha (372 aa).

The signal sequence occupies residues 1–22 (MAASVPWACCAVLAAAAAAVYT). One can recognise an Ig-like C2-type domain in the interval 27–104 (PQEAPHVQYE…WHLRHQVLLH (78 aa)). C46 and C89 are joined by a disulfide. 5 N-linked (GlcNAc...) asparagine glycosylation sites follow: N60, N70, N142, N190, and N261. Fibronectin type-III domains follow at residues 108–205 (PPRE…VKPD) and 206–306 (PPEN…TEEP). The WSXWS motif motif lies at 290–294 (WSDWS). The tract at residues 301–339 (PWTEEPRHLTTEAQAPETTTSTTSSLAPPPTTKICDPGE) is disordered. A compositionally biased stretch (low complexity) spans 311-326 (TEAQAPETTTSTTSSL). A lipid anchor (GPI-anchor amidated serine) is attached at S342. A propeptide spans 343 to 372 (GGGPSIPFLTSVPVTLVLAAAAATANNLLI) (removed in mature form).

It belongs to the type I cytokine receptor family. Type 3 subfamily. As to quaternary structure, forms a heterotrimer with LIFR and IL6ST. Interacts with heterodimeric neurotropic cytokine composed of CLCF1/CLC and CRLF1/CLF-1. Either alone or in complex with the heterodimer CLCF1-CRLF1 interacts with SORL1; this interaction may promote internalization and lysosomal degradation. In terms of tissue distribution, nervous system.

The protein localises to the cell membrane. In terms of biological role, binds to CNTF. The alpha subunit provides the receptor specificity. This Rattus norvegicus (Rat) protein is Ciliary neurotrophic factor receptor subunit alpha (Cntfr).